A 101-amino-acid polypeptide reads, in one-letter code: NADH-quinone oxidoreductase subunit K (101 aa).

3 helical membrane-spanning segments follow: residues 4 to 24 (LAHF…GIFL), 30 to 50 (IVLL…FVAF), and 61 to 81 (VFVF…LAIL).

This sequence belongs to the complex I subunit 4L family. As to quaternary structure, NDH-1 is composed of 14 different subunits. Subunits NuoA, H, J, K, L, M, N constitute the membrane sector of the complex.

It localises to the cell inner membrane. It carries out the reaction a quinone + NADH + 5 H(+)(in) = a quinol + NAD(+) + 4 H(+)(out). Its function is as follows. NDH-1 shuttles electrons from NADH, via FMN and iron-sulfur (Fe-S) centers, to quinones in the respiratory chain. The immediate electron acceptor for the enzyme in this species is believed to be ubiquinone. Couples the redox reaction to proton translocation (for every two electrons transferred, four hydrogen ions are translocated across the cytoplasmic membrane), and thus conserves the redox energy in a proton gradient. This is NADH-quinone oxidoreductase subunit K from Cupriavidus pinatubonensis (strain JMP 134 / LMG 1197) (Cupriavidus necator (strain JMP 134)).